We begin with the raw amino-acid sequence, 418 residues long: EPS I polysaccharide export inner membrane protein EpsF (418 aa).

The next 10 membrane-spanning stretches (helical) occupy residues 21-41, 45-65, 142-162, 170-190, 222-242, 262-282, 296-316, 326-346, 347-367, and 377-397; these read VLVVIGMLLVVPMAFPLLPII, CAAIFVILLPLGRLQHVLATA, PLLVWAVLIFISLMLAWIAIY, YVVFVSYLSTITLYALQGSAI, AGTHSSAAVVLLACAVVVLFL, LIVLLALAAAGAVFGSAEFVM, SAWELQLAVEAVLACLFAWLL, MAFLLFVVVCFSTSLFAPAVG, ARLFRYTYCFYIVYLCAFFFA, and KTLASLLLLASFGWAIFIVSA.

To S.marcescens SfuB.

The protein localises to the cell inner membrane. In terms of biological role, probably involved in polymerization and/or export of exopolysaccharide EPS I which functions as a virulence factor. May play a role in export of EPS I or its intermediates across the membranes. This Ralstonia nicotianae (strain ATCC BAA-1114 / GMI1000) (Ralstonia solanacearum) protein is EPS I polysaccharide export inner membrane protein EpsF (epsF).